A 397-amino-acid polypeptide reads, in one-letter code: Ubiquitin-like modifier-activating enzyme 5 (397 aa).

Gly77, Asp98, Lys121, Asn144, and Asn178 together coordinate ATP. Cys220 and Cys223 together coordinate Zn(2+). Catalysis depends on Cys244, which acts as the Glycyl thioester intermediate. Zn(2+)-binding residues include Cys297 and Cys302. The UFM1-interacting sequence (UIS) motif lies at 329 to 341 (VVHEDNDWGIELV). The segment at 342-372 (SEVSEEELKAASGPVPDLPEGIKVAYTIPIT) is linker. The UFC1-binding sequence (UFC) signature appears at 382-397 (DSEQSLDELMAQMKNL).

This sequence belongs to the ubiquitin-activating E1 family. UBA5 subfamily. As to quaternary structure, homodimer; homodimerization is required for ufm1 activation. Interacts (via UIS motif) with ufm1; binds ufm1 via a trans-binding mechanism in which ufm1 interacts with distinct sites in both subunits of the uba5 homodimer. Interacts (via C-terminus) with ufc1.

The protein localises to the cytoplasm. It localises to the nucleus. Its subcellular location is the endoplasmic reticulum membrane. The protein resides in the golgi apparatus. In terms of biological role, E1-like enzyme which specifically catalyzes the first step in ufmylation. Activates ufm1 by first adenylating its C-terminal glycine residue with ATP, and thereafter linking this residue to the side chain of a cysteine residue in E1, yielding a ufm1-E1 thioester and free AMP. Activates ufm1 via a trans-binding mechanism, in which ufm1 interacts with distinct sites in both subunits of the uba5 homodimer. Trans-binding also promotes stabilization of the uba5 homodimer, and enhances ATP-binding. Transfer of ufm1 from uba5 to the E2-like enzyme UFC1 also takes place using a trans mechanism. Ufmylation plays a key role in various processes, such as ribosome recycling, response to DNA damage, interferon response or reticulophagy (also called ER-phagy). The sequence is that of Ubiquitin-like modifier-activating enzyme 5 from Xenopus laevis (African clawed frog).